The sequence spans 1072 residues: Translation initiation factor IF-2 (1072 aa).

2 disordered regions span residues 55–369 (ILDK…TGTA) and 426–452 (ELVDVSKNKERGQRKRTSGDTQSVSKQ). 4 stretches are compositionally biased toward low complexity: residues 91 to 100 (AEASQAAEPA), 108 to 118 (EPATFAAEEPV), 126 to 179 (APRA…AEVA), and 186 to 212 (EAPQAPVEAPRAAVPAPAAAQPRPSVQ). A compositionally biased stretch (pro residues) spans 218-230 (PQPPPRSPVPPAV). A compositionally biased stretch (low complexity) spans 231-245 (RTPSSTSSSATVVSR). Residues 253 to 307 (QRGGPGGGRPGGPGGPGGRPGGPGGPGGRPGGPGGPGGRPGGPGGPGGRPGGPGG) show a composition bias toward gly residues. A compositionally biased stretch (basic and acidic residues) spans 426–436 (ELVDVSKNKER). The tr-type G domain maps to 570–737 (PRPPVVAIMG…NLALQAEVLE (168 aa)). The tract at residues 579-586 (GHVDHGKT) is G1. 579–586 (GHVDHGKT) is a GTP binding site. Residues 604–608 (GITQH) are G2. Residues 625–628 (DTPG) are G3. GTP contacts are provided by residues 625–629 (DTPGH) and 679–682 (NKMD). The G4 stretch occupies residues 679–682 (NKMD). The tract at residues 715–717 (SAK) is G5.

The protein belongs to the TRAFAC class translation factor GTPase superfamily. Classic translation factor GTPase family. IF-2 subfamily.

Its subcellular location is the cytoplasm. One of the essential components for the initiation of protein synthesis. Protects formylmethionyl-tRNA from spontaneous hydrolysis and promotes its binding to the 30S ribosomal subunits. Also involved in the hydrolysis of GTP during the formation of the 70S ribosomal complex. In Myxococcus xanthus (strain DK1622), this protein is Translation initiation factor IF-2.